The following is an 837-amino-acid chain: MSQTGSHPGRGLAGRWLWGAQPCLLLPIVPLSWLVWLLLLLLASLLPSARLASPLPREEEIVFPEKLNGSVLPGSGAPARLLCRLQAFGETLLLELEHDSGVQVEGLTVQYLGQAPELLGGAEPGTYLTGTINGEPESVASLHWDGGALLGVLQYRGAELHLQPLEGGTPNSAGGPGAHILRRKSPASGQGPMCNVKAPLGSPSPRPRRAKRFASLSRFVETLVVADDKMAAFHGAGLKRYLLTVMAAAAKAFKHPSIRNPVSLVVTRLVILGSGEEGPQVGPSAAQTLRSFCAWQRGLNTPEDSDPDHFDTAILFTRQDLCGVSTCDTLGMADVGTVCDPARSCAIVEDDGLQSAYTAAHELGHVFNMLHDNSKPCISLNGPLSTSRHVMAPVMAHVDPEEPWSPCSARFITDFLDNGYGHCLLDKPEAPLHLPVTFPGKDYDADRQCQLTFGPDSRHCPQLPPPCAALWCSGHLNGHAMCQTKHSPWADGTPCGPAQACMGGRCLHMDQLQDFNIPQAGGWGPWGPWGDCSRTCGGGVQFSSRDCTRPVPRNGGKYCEGRRTRFRSCNTEDCPTGSVLTFREEQCAAYNHCTDLFKSFPGPMDWVPRYTGVAPQDQCKLTCQARALGYYYVLEPRVVDGTPCSPDSSSVCVQGRCIHAGCDRIIGSKKKFDKCMVCGGDGSGCSKQSGSFRKFRYGYNNVVTIPTGATHILVRQQGNPGHRSIYLALKLPDGSYALNGEYTLMPSPTDVVLPGAISLRYSGATAASETLSGHGPLAQPLTLQVLVAGNPQDARLRYSFFVPRPTPSTPHPTPQDWLHRRAQILEILRRRPWVGRK.

An N-terminal signal peptide occupies residues 1-51 (MSQTGSHPGRGLAGRWLWGAQPCLLLPIVPLSWLVWLLLLLLASLLPSARL). A propeptide spanning residues 52–212 (ASPLPREEEI…PSPRPRRAKR (161 aa)) is cleaved from the precursor. Asn68 carries N-linked (GlcNAc...) asparagine glycosylation. Positions 166-191 (EGGTPNSAGGPGAHILRRKSPASGQG) are disordered. A Cysteine switch motif is present at residues 192–199 (PMCNVKAP). Cys194 contributes to the Zn(2+) binding site. In terms of domain architecture, Peptidase M12B spans 218-428 (RFVETLVVAD…GYGHCLLDKP (211 aa)). Intrachain disulfides connect Cys293-Cys345, Cys322-Cys327, Cys339-Cys423, Cys377-Cys407, Cys449-Cys472, Cys460-Cys482, Cys467-Cys501, Cys495-Cys506, Cys532-Cys569, Cys536-Cys574, and Cys547-Cys559. Position 361 (His361) interacts with Zn(2+). The active site involves Glu362. Zn(2+) contacts are provided by His365 and His371. The Disintegrin domain maps to 437 to 519 (TFPGKDYDAD…DQLQDFNIPQ (83 aa)). The region spanning 520–575 (AGGWGPWGPWGDCSRTCGGGVQFSSRDCTRPVPRNGGKYCEGRRTRFRSCNTEDCP) is the TSP type-1 domain. The tract at residues 686-837 (SKQSGSFRKF…LRRRPWVGRK (152 aa)) is spacer.

Interacts with SRPX2. Zn(2+) serves as cofactor. The precursor is cleaved by a furin endopeptidase. Post-translationally, glycosylated. Can be O-fucosylated by POFUT2 on a serine or a threonine residue found within the consensus sequence C1-X(2)-(S/T)-C2-G of the TSP type-1 repeat domains where C1 and C2 are the first and second cysteine residue of the repeat, respectively. Fucosylated repeats can then be further glycosylated by the addition of a beta-1,3-glucose residue by the glucosyltransferase, B3GALTL. Fucosylation mediates the efficient secretion of ADAMTS family members. Can also be C-glycosylated with one or two mannose molecules on tryptophan residues within the consensus sequence W-X-X-W of the TPRs, and N-glycosylated. These other glycosylations can also facilitate secretion.

The protein localises to the secreted. It localises to the extracellular space. Its subcellular location is the extracellular matrix. It carries out the reaction Glutamyl endopeptidase. Bonds cleaved include 370-Thr-Glu-Gly-Glu-|-Ala-Arg-Gly-Ser-377 in the interglobular domain of mammalian aggrecan.. In terms of biological role, cleaves aggrecan, a cartilage proteoglycan, at the '392-Glu-|-Ala-393' site and may be involved in its turnover. Also cleaves COMP. May play an important role in the destruction of aggrecan in arthritic diseases. This is A disintegrin and metalloproteinase with thrombospondin motifs 4 (ADAMTS4) from Pongo abelii (Sumatran orangutan).